Reading from the N-terminus, the 243-residue chain is 3-deoxy-manno-octulosonate cytidylyltransferase (243 aa).

Belongs to the KdsB family.

The protein resides in the cytoplasm. It carries out the reaction 3-deoxy-alpha-D-manno-oct-2-ulosonate + CTP = CMP-3-deoxy-beta-D-manno-octulosonate + diphosphate. Its pathway is nucleotide-sugar biosynthesis; CMP-3-deoxy-D-manno-octulosonate biosynthesis; CMP-3-deoxy-D-manno-octulosonate from 3-deoxy-D-manno-octulosonate and CTP: step 1/1. It participates in bacterial outer membrane biogenesis; lipopolysaccharide biosynthesis. Its function is as follows. Activates KDO (a required 8-carbon sugar) for incorporation into bacterial lipopolysaccharide in Gram-negative bacteria. The sequence is that of 3-deoxy-manno-octulosonate cytidylyltransferase from Helicobacter pylori (strain HPAG1).